A 99-amino-acid polypeptide reads, in one-letter code: Protein Tat (99 aa).

The segment at 1–24 (MEVVDPKIDPWNHPGSQPETPCNN) is interaction with human CREBBP. Residues 1–48 (MEVVDPKIDPWNHPGSQPETPCNNCYCKKCCFHCPLCFMKKGLGISYG) form a transactivation region. Residues cysteine 22, cysteine 25, and cysteine 27 each coordinate Zn(2+). A cysteine-rich region spans residues 22–37 (CNNCYCKKCCFHCPLC). Residue lysine 28 is modified to N6-acetyllysine; by host PCAF. Residues cysteine 30, histidine 33, cysteine 34, and cysteine 37 each contribute to the Zn(2+) site. Residues 38-48 (FMKKGLGISYG) form a core region. The disordered stretch occupies residues 47 to 99 (YGRKKRRQRRRTPQGSKIHQDPVPKQPLSQTRGDPTGPEESKKKVESQTETDP). Positions 48–58 (GRKKRRQRRRT) are enriched in basic residues. The Nuclear localization signal, RNA-binding (TAR), and protein transduction signature appears at 49–57 (RKKRRQRRR). Residues 49–86 (RKKRRQRRRTPQGSKIHQDPVPKQPLSQTRGDPTGPEE) form an interaction with the host capping enzyme RNGTT region. N6-acetyllysine; by host EP300 and GCN5L2 is present on residues lysine 50 and lysine 51. Asymmetric dimethylarginine; by host PRMT6 occurs at positions 52 and 53. A Glycyl lysine isopeptide (Lys-Gly) (interchain with G-Cter in ubiquitin) cross-link involves residue lysine 71. The short motif at 78–80 (RGD) is the Cell attachment site element.

Belongs to the lentiviruses Tat family. As to quaternary structure, interacts with host CCNT1. Associates with the P-TEFb complex composed at least of Tat, P-TEFb (CDK9 and CCNT1), TAR RNA, RNA Pol II. Recruits the HATs CREBBP, TAF1/TFIID, EP300, PCAF and GCN5L2. Interacts with host KAT5/Tip60; this interaction targets the latter to degradation. Interacts with the host deacetylase SIRT1. Interacts with host capping enzyme RNGTT; this interaction stimulates RNGTT. Binds to host KDR, and to the host integrins ITGAV/ITGB3 and ITGA5/ITGB1. Interacts with host KPNB1/importin beta-1 without previous binding to KPNA1/importin alpha-1. Interacts with EIF2AK2. Interacts with host nucleosome assembly protein NAP1L1; this interaction may be required for the transport of Tat within the nucleus, since the two proteins interact at the nuclear rim. Interacts with host C1QBP/SF2P32; this interaction involves lysine-acetylated Tat. Interacts with the host chemokine receptors CCR2, CCR3 and CXCR4. Interacts with host DPP4/CD26; this interaction may trigger an anti-proliferative effect. Interacts with host LDLR. Interacts with the host extracellular matrix metalloproteinase MMP1. Interacts with host PRMT6; this interaction mediates Tat's methylation. Interacts with, and is ubiquitinated by MDM2/Hdm2. Interacts with host PSMC3 and HTATIP2. Interacts with STAB1; this interaction may overcome SATB1-mediated repression of IL2 and IL2RA (interleukin) in T cells by binding to the same domain than HDAC1. Interacts (when acetylated) with human CDK13, thereby increasing HIV-1 mRNA splicing and promoting the production of the doubly spliced HIV-1 protein Nef. Interacts with host TBP; this interaction modulates the activity of transcriptional pre-initiation complex. Interacts with host RELA. Interacts with host PLSCR1; this interaction negatively regulates Tat transactivation activity by altering its subcellular distribution. In terms of processing, asymmetrical arginine methylation by host PRMT6 seems to diminish the transactivation capacity of Tat and affects the interaction with host CCNT1. Acetylation by EP300, CREBBP, GCN5L2/GCN5 and PCAF regulates the transactivation activity of Tat. EP300-mediated acetylation of Lys-50 promotes dissociation of Tat from the TAR RNA through the competitive binding to PCAF's bromodomain. In addition, the non-acetylated Tat's N-terminus can also interact with PCAF. PCAF-mediated acetylation of Lys-28 enhances Tat's binding to CCNT1. Lys-50 is deacetylated by SIRT1. Post-translationally, polyubiquitination by host MDM2 does not target Tat to degradation, but activates its transactivation function and fosters interaction with CCNT1 and TAR RNA. In terms of processing, phosphorylated by EIF2AK2 on serine and threonine residues adjacent to the basic region important for TAR RNA binding and function. Phosphorylation of Tat by EIF2AK2 is dependent on the prior activation of EIF2AK2 by dsRNA.

It is found in the host nucleus. The protein resides in the host nucleolus. Its subcellular location is the host cytoplasm. The protein localises to the secreted. Transcriptional activator that increases RNA Pol II processivity, thereby increasing the level of full-length viral transcripts. Recognizes a hairpin structure at the 5'-LTR of the nascent viral mRNAs referred to as the transactivation responsive RNA element (TAR) and recruits the cyclin T1-CDK9 complex (P-TEFb complex) that will in turn hyperphosphorylate the RNA polymerase II to allow efficient elongation. The CDK9 component of P-TEFb and other Tat-activated kinases hyperphosphorylate the C-terminus of RNA Pol II that becomes stabilized and much more processive. Other factors such as HTATSF1/Tat-SF1, SUPT5H/SPT5, and HTATIP2 are also important for Tat's function. Besides its effect on RNA Pol II processivity, Tat induces chromatin remodeling of proviral genes by recruiting the histone acetyltransferases (HATs) CREBBP, EP300 and PCAF to the chromatin. This also contributes to the increase in proviral transcription rate, especially when the provirus integrates in transcriptionally silent region of the host genome. To ensure maximal activation of the LTR, Tat mediates nuclear translocation of NF-kappa-B by interacting with host RELA. Through its interaction with host TBP, Tat may also modulate transcription initiation. Tat can reactivate a latently infected cell by penetrating in it and transactivating its LTR promoter. In the cytoplasm, Tat is thought to act as a translational activator of HIV-1 mRNAs. In terms of biological role, extracellular circulating Tat can be endocytosed by surrounding uninfected cells via the binding to several surface receptors such as CD26, CXCR4, heparan sulfate proteoglycans (HSPG) or LDLR. Neurons are rarely infected, but they internalize Tat via their LDLR. Through its interaction with nuclear HATs, Tat is potentially able to control the acetylation-dependent cellular gene expression. Modulates the expression of many cellular genes involved in cell survival, proliferation or in coding for cytokines or cytokine receptors. Tat plays a role in T-cell and neurons apoptosis. Tat induced neurotoxicity and apoptosis probably contribute to neuroAIDS. Circulating Tat also acts as a chemokine-like and/or growth factor-like molecule that binds to specific receptors on the surface of the cells, affecting many cellular pathways. In the vascular system, Tat binds to ITGAV/ITGB3 and ITGA5/ITGB1 integrins dimers at the surface of endothelial cells and competes with bFGF for heparin-binding sites, leading to an excess of soluble bFGF. This Homo sapiens (Human) protein is Protein Tat.